The chain runs to 156 residues: Cell division protein SepF (156 aa).

Over residues 23 to 36 (SYEKEQTDMKKQQD) the composition is skewed to basic and acidic residues. The tract at residues 23 to 48 (SYEKEQTDMKKQQDPPEQQDVTFPKA) is disordered. A compositionally biased stretch (polar residues) spans 37-48 (PPEQQDVTFPKA).

This sequence belongs to the SepF family. Homodimer. Interacts with FtsZ.

Its subcellular location is the cytoplasm. Functionally, cell division protein that is part of the divisome complex and is recruited early to the Z-ring. Probably stimulates Z-ring formation, perhaps through the cross-linking of FtsZ protofilaments. Its function overlaps with FtsA. This is Cell division protein SepF from Bacillus cereus (strain ATCC 10987 / NRS 248).